Consider the following 636-residue polypeptide: Threonine--tRNA ligase (636 aa).

In terms of domain architecture, TGS spans 1 to 61; the sequence is MPVITLPDGS…TQDVSLSIIT (61 aa). The tract at residues 242–533 is catalytic; sequence DHRKLGKKFD…LIEEYEGAFP (292 aa). Zn(2+)-binding residues include Cys333, His384, and His510.

It belongs to the class-II aminoacyl-tRNA synthetase family. In terms of assembly, homodimer. Requires Zn(2+) as cofactor.

It localises to the cytoplasm. It carries out the reaction tRNA(Thr) + L-threonine + ATP = L-threonyl-tRNA(Thr) + AMP + diphosphate + H(+). Its function is as follows. Catalyzes the attachment of threonine to tRNA(Thr) in a two-step reaction: L-threonine is first activated by ATP to form Thr-AMP and then transferred to the acceptor end of tRNA(Thr). Also edits incorrectly charged L-seryl-tRNA(Thr). This chain is Threonine--tRNA ligase, found in Saccharophagus degradans (strain 2-40 / ATCC 43961 / DSM 17024).